A 237-amino-acid chain; its full sequence is Large ribosomal subunit protein uL1 (237 aa).

This sequence belongs to the universal ribosomal protein uL1 family. Part of the 50S ribosomal subunit.

In terms of biological role, binds directly to 23S rRNA. The L1 stalk is quite mobile in the ribosome, and is involved in E site tRNA release. Its function is as follows. Protein L1 is also a translational repressor protein, it controls the translation of the L11 operon by binding to its mRNA. This chain is Large ribosomal subunit protein uL1, found in Dehalococcoides mccartyi (strain CBDB1).